The chain runs to 544 residues: Probable protein kinase UbiB (544 aa).

Residues aspartate 123–leucine 501 enclose the Protein kinase domain. Residues leucine 129–valine 137 and lysine 152 contribute to the ATP site. Aspartate 287 acts as the Proton acceptor in catalysis. Residues leucine 515–phenylalanine 537 form a helical membrane-spanning segment.

The protein belongs to the ABC1 family. UbiB subfamily.

It is found in the cell inner membrane. The protein operates within cofactor biosynthesis; ubiquinone biosynthesis [regulation]. Functionally, is probably a protein kinase regulator of UbiI activity which is involved in aerobic coenzyme Q (ubiquinone) biosynthesis. The sequence is that of Probable protein kinase UbiB from Aliivibrio fischeri (strain ATCC 700601 / ES114) (Vibrio fischeri).